The following is a 120-amino-acid chain: Synaptobrevin (120 aa).

The tract at residues 1 to 38 (MSAPPSGPAPDAQGGAPGQPTGPPGAPPNTTSNRRLQQ) is disordered. Residues 1–98 (MSAPPSGPAP…KRKYWWKNCK (98 aa)) lie on the Cytoplasmic side of the membrane. Polar residues predominate over residues 29–38 (NTTSNRRLQQ). In terms of domain architecture, v-SNARE coiled-coil homology spans 35 to 95 (RLQQTQAQVE…AKLKRKYWWK (61 aa)). The chain crosses the membrane as a helical; Anchor for type IV membrane protein span at residues 99–118 (MMIMLGGIGAIIVIVIIIYF). The Vesicular segment spans residues 119–120 (FT).

Belongs to the synaptobrevin family. As to expression, nervous system specific.

The protein localises to the cytoplasmic vesicle. It is found in the secretory vesicle. Its subcellular location is the synaptic vesicle membrane. The protein resides in the synapse. It localises to the synaptosome. This protein may play a role in packaging, transport or release of neurotransmitters. The polypeptide is Synaptobrevin (Tetronarce californica (Pacific electric ray)).